We begin with the raw amino-acid sequence, 220 residues long: Grancalcin (220 aa).

4 consecutive EF-hand domains span residues 51-86 (SPADDSMWTYFTAVAGQDGEVDAEELQRCLTQSGIS), 92-127 (FSLETCRIMIAMLDRDYTGKMGFNEFKELWAALNAW), 122-157 (AALNAWKQNFMTIDQDQSGTVEHHELSQAIALMGYR), and 158-193 (LSPQTLAAIVRRYSKNGRIFFDDYVACCVKLRALTD). Ca(2+) contacts are provided by Asp-105, Asp-107, Thr-109, Lys-111, Glu-116, Asp-135, Asp-137, Ser-139, Thr-141, and Glu-146.

In terms of assembly, homodimer. Interacts with SRI and LCP1.

It is found in the cytoplasm. The protein resides in the cytoplasmic granule membrane. Functionally, calcium-binding protein that may play a role in the adhesion of neutrophils to fibronectin. May play a role in the formation of focal adhesions. This chain is Grancalcin (Gca), found in Mus musculus (Mouse).